A 1862-amino-acid polypeptide reads, in one-letter code: Chitin synthase V (1862 aa).

Residues 1–26 (MAMSLPQLGGAGGPHTQPSLPSLPAH) are disordered. The region spanning 1–778 (MAMSLPQLGG…CWMEIAQLGE (778 aa)) is the Myosin motor domain. N63 carries N-linked (GlcNAc...) asparagine glycosylation. 104–111 (GESGAGKS) is a binding site for ATP. 5 N-linked (GlcNAc...) asparagine glycosylation sites follow: N123, N429, N483, N522, and N560. The disordered stretch occupies residues 592-643 (TVSSKPMRAPSVMSRKTHRTGRPSTAYKRQQQEAMEELDQQSQAGESKKNAK). The tract at residues 658–682 (LDNVQKAVTDPGTNSYFVFCLKPND) is actin-binding. A run of 2 helical transmembrane segments spans residues 884-904 (WVAL…RLIG) and 923-943 (MLIW…PMLI). The 63-residue stretch at 947-1009 (QYVYSSNELS…YAGKDISALF (63 aa)) folds into the Cytochrome b5 heme-binding domain. 3 N-linked (GlcNAc...) asparagine glycosylation sites follow: N1036, N1063, and N1192. Residues 1202–1222 (FILAISVMLASILVFKFLAAL) traverse the membrane as a helical segment. Residues N1459 and N1565 are each glycosylated (N-linked (GlcNAc...) asparagine). The next 3 helical transmembrane spans lie at 1590–1610 (FVVF…MYIV), 1623–1643 (VPIT…VIFI), and 1650–1670 (MVGW…GLPL). The N-linked (GlcNAc...) asparagine glycan is linked to N1771. The 56-residue stretch at 1804-1859 (MPSDDALLAEIRDILKTADLMTVTKKGIKQELERRFNVPLDAKRAYINSATEALLS) folds into the DEK-C domain.

This sequence in the N-terminal section; belongs to the TRAFAC class myosin-kinesin ATPase superfamily. Myosin family. The protein in the C-terminal section; belongs to the chitin synthase family. Class V subfamily.

The protein localises to the cell membrane. It carries out the reaction [(1-&gt;4)-N-acetyl-beta-D-glucosaminyl](n) + UDP-N-acetyl-alpha-D-glucosamine = [(1-&gt;4)-N-acetyl-beta-D-glucosaminyl](n+1) + UDP + H(+). Its function is as follows. Polymerizes chitin, a structural polymer of the cell wall and septum, by transferring the sugar moiety of UDP-GlcNAc to the non-reducing end of the growing chitin polymer. ChsV and chsVb do perform additive, but not redundant, functions in septum formation. Involved in cell wall integrity and resistance to antimicrobial plant defense compounds such as the tomato phytoanticipin alpha-tomatine or H(2)O(2), and plays a crucial role in vascular colonization and pathogenicity. Also plays an important role in nuclear sorting or distribution. The protein is Chitin synthase V of Fusarium oxysporum f. sp. lycopersici (strain 4287 / CBS 123668 / FGSC 9935 / NRRL 34936) (Fusarium vascular wilt of tomato).